The sequence spans 428 residues: Serine--tRNA ligase (428 aa).

233–235 contributes to the L-serine binding site; it reads TAE. 264 to 266 serves as a coordination point for ATP; that stretch reads RRE. Position 287 (Glu287) interacts with L-serine. 351–354 contributes to the ATP binding site; sequence EVSS. Position 387 (Ser387) interacts with L-serine.

It belongs to the class-II aminoacyl-tRNA synthetase family. Type-1 seryl-tRNA synthetase subfamily. Homodimer. The tRNA molecule binds across the dimer.

It is found in the cytoplasm. It carries out the reaction tRNA(Ser) + L-serine + ATP = L-seryl-tRNA(Ser) + AMP + diphosphate + H(+). The enzyme catalyses tRNA(Sec) + L-serine + ATP = L-seryl-tRNA(Sec) + AMP + diphosphate + H(+). It participates in aminoacyl-tRNA biosynthesis; selenocysteinyl-tRNA(Sec) biosynthesis; L-seryl-tRNA(Sec) from L-serine and tRNA(Sec): step 1/1. Functionally, catalyzes the attachment of serine to tRNA(Ser). Is also able to aminoacylate tRNA(Sec) with serine, to form the misacylated tRNA L-seryl-tRNA(Sec), which will be further converted into selenocysteinyl-tRNA(Sec). This is Serine--tRNA ligase from Salinibacter ruber (strain DSM 13855 / M31).